Consider the following 313-residue polypeptide: MIIVTGGAGMIGSNIVKSLNDKGFNDILVVDNLKDGKKFKNLVDLDITDYMDKEDFITQIMAGDDFGPIEAIFHEGACSATTEWDGKYIMMNNYEYSKELLHFCIEREIPFLYASSAATYGETDTFIEEREYEGALNVYGYSKQQFDNYVRRLWADAEEHNETLSQITGFRYFNVYGPREQHKGSMASVAFHLNNQMNAGDNPKLFEGSDEFKRDFVYVGDVAAVNLWFLENGVSGIYNCGTGRAEPFRAVAEAVIKHHGKGEVETIPFPEHLKGAYQEFTQADLTKLRAAGCDVEFKSVADGVAEYMAMINK.

Residues 10 to 11, 31 to 32, Lys-38, Lys-53, 75 to 79, and Asn-92 each bind NADP(+); these read MI, DN, and EGACS. The active-site Proton acceptor is Tyr-139. Lys-143 is a binding site for NADP(+). Residue Asn-174 participates in substrate binding. Residues Val-175 and Lys-183 each coordinate NADP(+). The Proton acceptor role is filled by Lys-183. Substrate is bound by residues Ser-185, His-192, 206 to 209, Arg-214, and Tyr-277; that span reads FEGS.

It belongs to the NAD(P)-dependent epimerase/dehydratase family. HldD subfamily. Homopentamer. The cofactor is NADP(+).

The catalysed reaction is ADP-D-glycero-beta-D-manno-heptose = ADP-L-glycero-beta-D-manno-heptose. The protein operates within nucleotide-sugar biosynthesis; ADP-L-glycero-beta-D-manno-heptose biosynthesis; ADP-L-glycero-beta-D-manno-heptose from D-glycero-beta-D-manno-heptose 7-phosphate: step 4/4. Its function is as follows. Catalyzes the interconversion between ADP-D-glycero-beta-D-manno-heptose and ADP-L-glycero-beta-D-manno-heptose via an epimerization at carbon 6 of the heptose. The chain is ADP-L-glycero-D-manno-heptose-6-epimerase from Aliivibrio fischeri (strain MJ11) (Vibrio fischeri).